Consider the following 200-residue polypeptide: MKPYFCRVFVFCFLIRLLTGEINGSADHRMFSFHNGGVQISCKYPETVQQLKMRLFREREVLCELTKTKGSGNAVSIKNPMLCLYHLSNNSVSFFLNNPDSSQGSYYFCSLSIFDPPPFQERNLSGGYLHIYESQLCCQLKLWLPVGCAAFVVVLLFGCILIIWFSKKKYGSSVHDPNSEYMFMAAVNTNKKSRLAGVTS.

A signal peptide spans 1-20 (MKPYFCRVFVFCFLIRLLTG). The Extracellular portion of the chain corresponds to 21–144 (EINGSADHRM…QLCCQLKLWL (124 aa)). The N-linked (GlcNAc...) asparagine glycan is linked to N23. The 104-residue stretch at 30-133 (MFSFHNGGVQ…LSGGYLHIYE (104 aa)) folds into the Ig-like V-type domain. Cystine bridges form between C42–C109 and C63–C83. N-linked (GlcNAc...) asparagine glycans are attached at residues N89 and N123. The helical transmembrane segment at 145-165 (PVGCAAFVVVLLFGCILIIWF) threads the bilayer. Over 166-200 (SKKKYGSSVHDPNSEYMFMAAVNTNKKSRLAGVTS) the chain is Cytoplasmic.

As to quaternary structure, homodimer; disulfide-linked. Interacts with ICOSLG. Interacts with PIK3R1. Interacts with TBK1; this interaction is critical for the maturation of T follicular regulatory cells. Post-translationally, N-glycosylated. Expressed on activated T-cells and resting memory T-cells. High expression seen in the thymic medulla and in the germinal centers and T-cell zones of lymph nodes and Peyer patches. Expressed at low levels in the spleen.

It is found in the cell membrane. Its function is as follows. Stimulatory receptor expressed in activated or antigen-experienced T-cells that plays an important role in the immune response. Upon binding to its ligand ICOSL expressed on antigen presenting cells (APCs), delivers costimulatory signals that enhances all basic T-cell responses to a foreign antigen, namely proliferation, secretion of lymphokines including IL10, up-regulation of molecules that mediate cell-cell interaction, and effective help for antibody secretion by B-cells. Also acts as a costimulatory receptor critical for the differentiation of T follicular regulatory cells upon immune challenges such as viral infection. Mechanistically, potentiates TCR-induced calcium flux by augmenting PLCG1 activation and actin remodeling. In addition, activates PI3K signaling pathways independently of calcium flux. Essential both for efficient interaction between T and B-cells and for normal antibody responses to T-cell dependent antigens. Prevents the apoptosis of pre-activated T-cells. Plays a critical role in CD40-mediated class switching of immunoglobin isotypes. This is Inducible T-cell costimulator (Icos) from Mus musculus (Mouse).